Reading from the N-terminus, the 507-residue chain is Glucose-6-phosphate isomerase (507 aa).

Catalysis depends on Glu-338, which acts as the Proton donor. Residues His-369 and Lys-479 contribute to the active site.

It belongs to the GPI family.

It is found in the cytoplasm. It catalyses the reaction alpha-D-glucose 6-phosphate = beta-D-fructose 6-phosphate. Its pathway is carbohydrate biosynthesis; gluconeogenesis. It functions in the pathway carbohydrate degradation; glycolysis; D-glyceraldehyde 3-phosphate and glycerone phosphate from D-glucose: step 2/4. In terms of biological role, provides a gateway for fructose into the Entner-Doudouroff pathway. Functionally, catalyzes the reversible isomerization of glucose-6-phosphate to fructose-6-phosphate. The protein is Glucose-6-phosphate isomerase of Zymomonas mobilis subsp. mobilis (strain ATCC 31821 / ZM4 / CP4).